The chain runs to 456 residues: Flagellum-specific ATP synthase (456 aa).

ATP is bound at residue 182–189 (AGSGVGKS).

This sequence belongs to the ATPase alpha/beta chains family.

The protein localises to the cytoplasm. It carries out the reaction ATP + H2O + 4 H(+)(in) = ADP + phosphate + 5 H(+)(out). In terms of biological role, probable catalytic subunit of a protein translocase for flagellum-specific export, or a proton translocase involved in local circuits at the flagellum. May be involved in a specialized protein export pathway that proceeds without signal peptide cleavage. The protein is Flagellum-specific ATP synthase (fliI) of Salmonella typhimurium (strain LT2 / SGSC1412 / ATCC 700720).